A 458-amino-acid chain; its full sequence is NADH-quinone oxidoreductase subunit N (458 aa).

14 consecutive transmembrane segments (helical) span residues 2-22 (LLIL…CFAL), 30-50 (IIYN…FKYS), 62-82 (GINI…SLII), 93-113 (AIKF…FVAI), 118-138 (FLLL…LAGF), 153-173 (FILG…IYGF), 196-216 (LIIG…SSPL), 235-255 (FTSA…KLII), 261-281 (INYN…AFGA), 290-310 (LMAY…ILPN), 319-339 (LYIL…IMLF), 361-381 (IAAL…LTGF), 397-417 (FTLA…YLKV), and 438-458 (LLLI…IILF).

This sequence belongs to the complex I subunit 2 family. NDH-1 is composed of 14 different subunits. Subunits NuoA, H, J, K, L, M, N constitute the membrane sector of the complex.

It is found in the cell inner membrane. It carries out the reaction a quinone + NADH + 5 H(+)(in) = a quinol + NAD(+) + 4 H(+)(out). In terms of biological role, NDH-1 shuttles electrons from NADH, via FMN and iron-sulfur (Fe-S) centers, to quinones in the respiratory chain. The immediate electron acceptor for the enzyme in this species is believed to be ubiquinone. Couples the redox reaction to proton translocation (for every two electrons transferred, four hydrogen ions are translocated across the cytoplasmic membrane), and thus conserves the redox energy in a proton gradient. The protein is NADH-quinone oxidoreductase subunit N of Rickettsia typhi (strain ATCC VR-144 / Wilmington).